We begin with the raw amino-acid sequence, 124 residues long: Small ribosomal subunit protein uS13 (124 aa).

The disordered stretch occupies residues 87 to 124 (GSYRGNRHRKRLPVRGQRTKTNSRTRKGKRRTVGSKTK). Basic residues predominate over residues 91-124 (GNRHRKRLPVRGQRTKTNSRTRKGKRRTVGSKTK).

Belongs to the universal ribosomal protein uS13 family. As to quaternary structure, part of the 30S ribosomal subunit. Forms a loose heterodimer with protein S19. Forms two bridges to the 50S subunit in the 70S ribosome.

Located at the top of the head of the 30S subunit, it contacts several helices of the 16S rRNA. In the 70S ribosome it contacts the 23S rRNA (bridge B1a) and protein L5 of the 50S subunit (bridge B1b), connecting the 2 subunits; these bridges are implicated in subunit movement. Contacts the tRNAs in the A and P-sites. This is Small ribosomal subunit protein uS13 from Elusimicrobium minutum (strain Pei191).